The sequence spans 197 residues: Zinc finger protein 581 (197 aa).

A compositionally biased stretch (pro residues) spans 1 to 10 (MLVLPSPCPQ). Positions 1-52 (MLVLPSPCPQPLAFSSVETMEGPPRRTCRSPEPGPSSSIGSPQASSPPRPNH) are disordered. Residues 35 to 44 (PSSSIGSPQA) are compositionally biased toward low complexity. 4 consecutive C2H2-type zinc fingers follow at residues 87–109 (YSCP…SITH), 115–137 (FECD…HSIH), 145–167 (HGCP…SRVH), and 173–196 (FQCP…RWKH).

The protein localises to the nucleus. May be involved in transcriptional regulation. The polypeptide is Zinc finger protein 581 (ZNF581) (Homo sapiens (Human)).